We begin with the raw amino-acid sequence, 2108 residues long: Mycocerosic acid synthase-like polyketide synthase (2108 aa).

Positions 1-23 (MGKERTKTVDRTRVTPVAVIGMG) are cleaved as a signal peptide. Cys-24 is lipidated: N-palmitoyl cysteine. The S-diacylglycerol cysteine moiety is linked to residue Cys-24. Residues 24–436 (CRLPGGIDSP…GTNVHAIVEQ (413 aa)) form the Ketosynthase family 3 (KS3) domain. Cys-185 (acyl-thioester intermediate; for beta-ketoacyl synthase activity) is an active-site residue. Catalysis depends on for beta-ketoacyl synthase activity residues His-320 and His-356. The tract at residues 438-542 (PVPAPESGAP…PYPPAVGQDD (105 aa)) is linker domain (LD). The tract at residues 543–842 (RGPVWVFSGQ…AAALAGMRRE (300 aa)) is acyltransferase (AT). Catalysis depends on Ser-634, which acts as the Acyl-ester intermediate; for acyltransferase activity. The interval 900 to 1184 (NTVAVHPLLG…LAVRGLQLGT (285 aa)) is dehydratase (DH). An N-terminal hotdog fold region spans residues 905 to 1025 (HPLLGSHVRL…AVLHVVREAD (121 aa)). Residues 905-1191 (HPLLGSHVRL…LGTGASQASE (287 aa)) enclose the PKS/mFAS DH domain. His-938 functions as the Proton acceptor; for dehydratase activity in the catalytic mechanism. A C-terminal hotdog fold region spans residues 1044–1191 (PHKVDGAEVR…LGTGASQASE (148 aa)). Residue Asp-1108 is the Proton donor; for dehydratase activity of the active site. The tract at residues 1220-1391 (AWLLISTCDA…SGEDETAWRN (172 aa)) is pseudo beta-ketoacyl reductase (PsiKR). The enoylreductase (ER) stretch occupies residues 1419–1743 (AGMRLQIRTP…EHTGKLILDV (325 aa)). The interval 1765–2004 (GSYIITGGLG…HSPFAEKFQS (240 aa)) is beta-ketoacyl reductase (KR). Residues 1773–1776 (LGGL), 1796–1799 (SRSQ), 1824–1825 (DI), and 1897–1898 (FS) contribute to the NADP(+) site. Residues 2025–2101 (EEWPDRLRRL…DLMCDKLAAD (77 aa)) enclose the Carrier domain. O-(pantetheine 4'-phosphoryl)serine is present on Ser-2060.

In terms of assembly, homodimer.

The protein resides in the cell membrane. Its pathway is lipid metabolism; fatty acid biosynthesis. Polyketide synthase likely involved in the biosynthesis of a polymethyl-branched fatty acid (PMB-FA) that might only be produced during host infection. Is required for the full virulence of M.tuberculosis during host infection. This is Mycocerosic acid synthase-like polyketide synthase from Mycobacterium tuberculosis (strain ATCC 25618 / H37Rv).